The chain runs to 132 residues: Fluoride-specific ion channel FluC 1 (132 aa).

The next 4 membrane-spanning stretches (helical) occupy residues 9–29, 35–55, 72–89, and 100–120; these read LAAV…LSAL, ASWP…VGYF, LLGT…TMQV, and WGLA…AVHL. Residues glycine 79 and threonine 82 each coordinate Na(+).

This sequence belongs to the fluoride channel Fluc/FEX (TC 1.A.43) family.

The protein resides in the cell membrane. It carries out the reaction fluoride(in) = fluoride(out). With respect to regulation, na(+) is not transported, but it plays an essential structural role and its presence is essential for fluoride channel function. Fluoride-specific ion channel. Important for reducing fluoride concentration in the cell, thus reducing its toxicity. The sequence is that of Fluoride-specific ion channel FluC 1 from Mycolicibacterium paratuberculosis (strain ATCC BAA-968 / K-10) (Mycobacterium paratuberculosis).